Consider the following 405-residue polypeptide: L-rhamnonate dehydratase (405 aa).

Positions 33 and 59 each coordinate substrate. Mg(2+) is bound by residues aspartate 226, glutamate 252, and glutamate 280. The Proton acceptor role is filled by histidine 329. Glutamate 349 lines the substrate pocket.

This sequence belongs to the mandelate racemase/muconate lactonizing enzyme family. RhamD subfamily. Homooctamer; tetramer of dimers. It depends on Mg(2+) as a cofactor.

It carries out the reaction L-rhamnonate = 2-dehydro-3-deoxy-L-rhamnonate + H2O. Its function is as follows. Catalyzes the dehydration of L-rhamnonate to 2-keto-3-deoxy-L-rhamnonate (KDR). This chain is L-rhamnonate dehydratase, found in Escherichia coli O45:K1 (strain S88 / ExPEC).